We begin with the raw amino-acid sequence, 504 residues long: Aspartyl/glutamyl-tRNA(Asn/Gln) amidotransferase subunit B (504 aa).

This sequence belongs to the GatB/GatE family. GatB subfamily. In terms of assembly, heterotrimer of A, B and C subunits.

It catalyses the reaction L-glutamyl-tRNA(Gln) + L-glutamine + ATP + H2O = L-glutaminyl-tRNA(Gln) + L-glutamate + ADP + phosphate + H(+). It carries out the reaction L-aspartyl-tRNA(Asn) + L-glutamine + ATP + H2O = L-asparaginyl-tRNA(Asn) + L-glutamate + ADP + phosphate + 2 H(+). In terms of biological role, allows the formation of correctly charged Asn-tRNA(Asn) or Gln-tRNA(Gln) through the transamidation of misacylated Asp-tRNA(Asn) or Glu-tRNA(Gln) in organisms which lack either or both of asparaginyl-tRNA or glutaminyl-tRNA synthetases. The reaction takes place in the presence of glutamine and ATP through an activated phospho-Asp-tRNA(Asn) or phospho-Glu-tRNA(Gln). The protein is Aspartyl/glutamyl-tRNA(Asn/Gln) amidotransferase subunit B of Rhodococcus opacus (strain B4).